Reading from the N-terminus, the 184-residue chain is NADH-quinone oxidoreductase subunit B (184 aa).

[4Fe-4S] cluster-binding residues include Cys37, Cys38, Cys103, and Cys132.

This sequence belongs to the complex I 20 kDa subunit family. In terms of assembly, NDH-1 is composed of 14 different subunits. Subunits NuoB, C, D, E, F, and G constitute the peripheral sector of the complex. It depends on [4Fe-4S] cluster as a cofactor.

The protein resides in the cell membrane. The enzyme catalyses a quinone + NADH + 5 H(+)(in) = a quinol + NAD(+) + 4 H(+)(out). Its function is as follows. NDH-1 shuttles electrons from NADH, via FMN and iron-sulfur (Fe-S) centers, to quinones in the respiratory chain. The immediate electron acceptor for the enzyme in this species is believed to be a menaquinone. Couples the redox reaction to proton translocation (for every two electrons transferred, four hydrogen ions are translocated across the cytoplasmic membrane), and thus conserves the redox energy in a proton gradient. This chain is NADH-quinone oxidoreductase subunit B, found in Rhodococcus jostii (strain RHA1).